Consider the following 156-residue polypeptide: Lipoprotein signal peptidase (156 aa).

Helical transmembrane passes span 57–77 and 83–103; these read LFLI…LFIN and ILKI…IDRI. Residues Asp-110 and Asp-129 contribute to the active site. A helical membrane pass occupies residues 124–144; sequence IFNIADVLVSLGTILLIIFII.

Belongs to the peptidase A8 family.

The protein resides in the cell membrane. The enzyme catalyses Release of signal peptides from bacterial membrane prolipoproteins. Hydrolyzes -Xaa-Yaa-Zaa-|-(S,diacylglyceryl)Cys-, in which Xaa is hydrophobic (preferably Leu), and Yaa (Ala or Ser) and Zaa (Gly or Ala) have small, neutral side chains.. Its pathway is protein modification; lipoprotein biosynthesis (signal peptide cleavage). This protein specifically catalyzes the removal of signal peptides from prolipoproteins. The polypeptide is Lipoprotein signal peptidase (Clostridium tetani (strain Massachusetts / E88)).